The primary structure comprises 173 residues: Monothiol glutaredoxin-S14, chloroplastic (173 aa).

The N-terminal 63 residues, 1-63 (MALRSVKTPT…KLKPTKFRCS (63 aa)), are a transit peptide targeting the chloroplast. A Glutaredoxin domain is found at 72 to 173 (KDTLEKLVNS…QEEVEKAMCS (102 aa)). Lys89 lines the glutathione pocket. Positions 97 and 99 each coordinate [2Fe-2S] cluster. Cys97 is subject to S-glutathionyl cysteine. The tract at residues 97 to 100 (CGFS) is required for CAX1 activation. Residues Arg126 and Lys130 each contribute to the glutathione site. The segment at 133-137 (SNWPT) is required for CAX1 activation. Residues Phe138 and 151–152 (CD) contribute to the glutathione site.

Belongs to the glutaredoxin family. CGFS subfamily. [2Fe-2S]-bridged holo-homodimer. Interacts with N-terminal part of CAX1 in yeast. Interacts in vitro with SUFE1, BOLA1, BOLA2 and BOLA4. Interacts in vivo only with SUFE1, BOLA1 and BOLA4. Interacts with SBP1. In terms of tissue distribution, highly expressed in leaves, at intermediate levels in stems and at lower levels in roots and flowers.

It is found in the plastid. The protein localises to the chloroplast. May only reduce GSH-thiol disulfides, but not protein disulfides (Potential). Probably involved in the regulation of the redox state of the BOLA proteins (Potential). May act as Fe-S cluster donors to Fe-S cluster-requiring proteins. May protect cells against protein oxidative damage. May regulate CAX cation transporters. The GRXS14-BOLA1 heterodimer binds a labile, oxygen sensitive Fe-S cluster. This chain is Monothiol glutaredoxin-S14, chloroplastic, found in Arabidopsis thaliana (Mouse-ear cress).